Reading from the N-terminus, the 291-residue chain is MFKGSCVALITPFTEDGVNYEELRKLLEWHIKNHTDAILVCGTTGEGSTMTLEEKKEVIKFSVEVVNKRVPVIAGTGTNNTKASIELSKYAEEVGADMVLIITPYYNKTSQKGLYAHFSAINDAINIPIMLYNVPSRTGMNITPLMLDKLADLNNVVAIKEASGDLSQVAKMAELCGDRIAIYSGNDDQIVPILSLGGAGVVSVLANILPEETHNICEKYFLGEVIESRNLQLKYLSLANSLFIETNPIPVKTAMNLMNFNCGPLRLPLCEMEDSNLIILEENLKANGLIK.

Thr-44 contacts pyruvate. Tyr-132 serves as the catalytic Proton donor/acceptor. Lys-160 functions as the Schiff-base intermediate with substrate in the catalytic mechanism. Val-202 serves as a coordination point for pyruvate.

The protein belongs to the DapA family. In terms of assembly, homotetramer; dimer of dimers.

It is found in the cytoplasm. The catalysed reaction is L-aspartate 4-semialdehyde + pyruvate = (2S,4S)-4-hydroxy-2,3,4,5-tetrahydrodipicolinate + H2O + H(+). It functions in the pathway amino-acid biosynthesis; L-lysine biosynthesis via DAP pathway; (S)-tetrahydrodipicolinate from L-aspartate: step 3/4. Its function is as follows. Catalyzes the condensation of (S)-aspartate-beta-semialdehyde [(S)-ASA] and pyruvate to 4-hydroxy-tetrahydrodipicolinate (HTPA). The sequence is that of 4-hydroxy-tetrahydrodipicolinate synthase from Clostridium perfringens (strain 13 / Type A).